An 81-amino-acid chain; its full sequence is Small ribosomal subunit protein bS16 (81 aa).

It belongs to the bacterial ribosomal protein bS16 family.

The polypeptide is Small ribosomal subunit protein bS16 (Caldicellulosiruptor saccharolyticus (strain ATCC 43494 / DSM 8903 / Tp8T 6331)).